Here is a 128-residue protein sequence, read N- to C-terminus: UPF0102 protein KPN78578_35270 (128 aa).

Residues 1–20 (MAQVPAGKNRSGQLSKQTGD) form a disordered region.

Belongs to the UPF0102 family.

This is UPF0102 protein KPN78578_35270 from Klebsiella pneumoniae subsp. pneumoniae (strain ATCC 700721 / MGH 78578).